Here is a 200-residue protein sequence, read N- to C-terminus: Somatotropin (200 aa).

The signal sequence occupies residues Met1–Thr22. His38 is a Zn(2+) binding site. A disulfide bridge connects residues Cys71 and Cys173. Position 182 (Glu182) interacts with Zn(2+). A disulfide bond links Cys190 and Cys198.

This sequence belongs to the somatotropin/prolactin family.

The protein resides in the secreted. In terms of biological role, growth hormone plays an important role in growth control and is involved in the regulation of several anabolic processes. Implicated as an osmoregulatory substance important for seawater adaptation. The protein is Somatotropin (gh) of Pangasianodon gigas (Mekong giant catfish).